A 235-amino-acid chain; its full sequence is Putative N-acetylmannosamine-6-phosphate 2-epimerase (235 aa).

Belongs to the NanE family.

It carries out the reaction an N-acyl-D-glucosamine 6-phosphate = an N-acyl-D-mannosamine 6-phosphate. The protein operates within amino-sugar metabolism; N-acetylneuraminate degradation; D-fructose 6-phosphate from N-acetylneuraminate: step 3/5. Functionally, converts N-acetylmannosamine-6-phosphate (ManNAc-6-P) to N-acetylglucosamine-6-phosphate (GlcNAc-6-P). This is Putative N-acetylmannosamine-6-phosphate 2-epimerase from Aliivibrio fischeri (strain ATCC 700601 / ES114) (Vibrio fischeri).